Consider the following 278-residue polypeptide: HTH-type transcriptional activator RhaS (278 aa).

The HTH araC/xylS-type domain maps to 174-272; that stretch reads NQLMAWLEDH…NWSPRDIRQG (99 aa). 2 DNA-binding regions (H-T-H motif) span residues 191 to 212 and 239 to 262; these read EAVA…KQHT and VTEI…RREF.

As to quaternary structure, binds DNA as a dimer.

It is found in the cytoplasm. Functionally, activates expression of the rhaBAD and rhaT operons. This Salmonella enteritidis PT4 (strain P125109) protein is HTH-type transcriptional activator RhaS.